The sequence spans 193 residues: Large ribosomal subunit protein uL5 (193 aa).

This sequence belongs to the universal ribosomal protein uL5 family. In terms of assembly, part of the 50S ribosomal subunit; part of the 5S rRNA/L5/L18/L25 subcomplex. Contacts the 5S rRNA and the P site tRNA. Forms a bridge to the 30S subunit in the 70S ribosome.

Its function is as follows. This is one of the proteins that bind and probably mediate the attachment of the 5S RNA into the large ribosomal subunit, where it forms part of the central protuberance. In the 70S ribosome it contacts protein S13 of the 30S subunit (bridge B1b), connecting the 2 subunits; this bridge is implicated in subunit movement. Contacts the P site tRNA; the 5S rRNA and some of its associated proteins might help stabilize positioning of ribosome-bound tRNAs. The sequence is that of Large ribosomal subunit protein uL5 from Arthrobacter sp. (strain FB24).